We begin with the raw amino-acid sequence, 177 residues long: Coatomer subunit zeta-1 (177 aa).

Belongs to the adaptor complexes small subunit family. As to quaternary structure, oligomeric complex that consists of at least the alpha, beta, beta', gamma, delta, epsilon and zeta subunits.

The protein resides in the cytoplasm. It localises to the golgi apparatus membrane. The protein localises to the cytoplasmic vesicle. It is found in the COPI-coated vesicle membrane. Functionally, the coatomer is a cytosolic protein complex that binds to dilysine motifs and reversibly associates with Golgi non-clathrin-coated vesicles, which further mediate biosynthetic protein transport from the ER, via the Golgi up to the trans Golgi network. Coatomer complex is required for budding from Golgi membranes, and is essential for the retrograde Golgi-to-ER transport of dilysine-tagged proteins. The zeta subunit may be involved in regulating the coat assembly and, hence, the rate of biosynthetic protein transport due to its association-dissociation properties with the coatomer complex. The sequence is that of Coatomer subunit zeta-1 (COPZ1) from Oryza sativa subsp. japonica (Rice).